The following is a 526-amino-acid chain: Cytochrome P450 monooxygenase patI (526 aa).

At 1 to 6 (MDILQL) the chain is on the cytoplasmic side. A helical membrane pass occupies residues 7 to 29 (APTHLLAILLSSTSALFLITYLL). The Lumenal portion of the chain corresponds to 30–526 (RAGHRPSDLP…EAQEVFARFD (497 aa)). A glycan (N-linked (GlcNAc...) asparagine) is linked at N81. C446 is a binding site for heme.

The protein belongs to the cytochrome P450 family. It depends on heme as a cofactor.

It localises to the endoplasmic reticulum membrane. The catalysed reaction is 3-hydroxybenzyl alcohol + reduced [NADPH--hemoprotein reductase] + O2 = gentisyl alcohol + oxidized [NADPH--hemoprotein reductase] + H2O + H(+). Its pathway is mycotoxin biosynthesis; patulin biosynthesis. Functionally, cytochrome P450 monooxygenase; part of the gene cluster that mediates the biosynthesis of patulin, an acetate-derived tetraketide mycotoxin produced by several fungal species that shows antimicrobial properties against several bacteria. PatI catalyzes the conversion of m-hydroxybenzyl alcohol into gentisyl alcohol. The pathway begins with the synthesis of 6-methylsalicylic acid by the polyketide synthase (PKS) patK via condensation of acetate and malonate units. The 6-methylsalicylic acid decarboxylase patG then catalyzes the decarboxylation of 6-methylsalicylic acid to yield m-cresol (also known as 3-methylphenol). These first reactions occur in the cytosol. The intermediate m-cresol is then transported into the endoplasmic reticulum where the cytochrome P450 monooxygenase patH converts it to m-hydroxybenzyl alcohol, which is further converted to gentisyl alcohol by the cytochrome P450 monooxygenase patI. The oxidoreductases patJ and patO further convert gentisyl alcohol to isoepoxydon in the vacuole. PatN catalyzes then the transformation of isoepoxydon into phyllostine. The cluster protein patF is responsible for the conversion from phyllostine to neopatulin whereas the alcohol dehydrogenase patD converts neopatulin to E-ascladiol. The steps between isoepoxydon and E-ascladiol occur in the cytosol, and E-ascladiol is probably secreted to the extracellular space by one of the cluster-specific transporters patC or patM. Finally, the secreted patulin synthase patE catalyzes the conversion of E-ascladiol to patulin. The protein is Cytochrome P450 monooxygenase patI of Penicillium expansum (Blue mold rot fungus).